The chain runs to 398 residues: 1-deoxy-D-xylulose 5-phosphate reductoisomerase (398 aa).

8 residues coordinate NADPH: threonine 10, glycine 11, serine 12, isoleucine 13, glycine 36, lysine 37, asparagine 38, and asparagine 124. 1-deoxy-D-xylulose 5-phosphate is bound at residue lysine 125. An NADPH-binding site is contributed by glutamate 126. Aspartate 150 serves as a coordination point for Mn(2+). 1-deoxy-D-xylulose 5-phosphate contacts are provided by serine 151, glutamate 152, serine 186, and histidine 209. Residue glutamate 152 participates in Mn(2+) binding. Glycine 215 contributes to the NADPH binding site. Residues serine 222, asparagine 227, lysine 228, and glutamate 231 each contribute to the 1-deoxy-D-xylulose 5-phosphate site. Residue glutamate 231 coordinates Mn(2+).

The protein belongs to the DXR family. In terms of assembly, homodimer. Mg(2+) is required as a cofactor. It depends on Mn(2+) as a cofactor.

It carries out the reaction 2-C-methyl-D-erythritol 4-phosphate + NADP(+) = 1-deoxy-D-xylulose 5-phosphate + NADPH + H(+). The protein operates within isoprenoid biosynthesis; isopentenyl diphosphate biosynthesis via DXP pathway; isopentenyl diphosphate from 1-deoxy-D-xylulose 5-phosphate: step 1/6. Its function is as follows. Catalyzes the NADPH-dependent rearrangement and reduction of 1-deoxy-D-xylulose-5-phosphate (DXP) to 2-C-methyl-D-erythritol 4-phosphate (MEP). The sequence is that of 1-deoxy-D-xylulose 5-phosphate reductoisomerase from Shigella flexneri.